The primary structure comprises 419 residues: Probable dual-specificity RNA methyltransferase RlmN (419 aa).

The segment at 1-21 is disordered; sequence MTAESDSPDGPVSAGTGRPVR. Glu124 serves as the catalytic Proton acceptor. The Radical SAM core domain maps to 130–369; sequence YPDRATVCVS…ATTVRDTRGR (240 aa). The cysteines at positions 137 and 375 are disulfide-linked. [4Fe-4S] cluster-binding residues include Cys144, Cys148, and Cys151. S-adenosyl-L-methionine contacts are provided by residues 199-200, Ser233, 256-258, and Asn332; these read GE and SLH. Cys375 serves as the catalytic S-methylcysteine intermediate. The disordered stretch occupies residues 383–419; sequence AGRARRVESARPVESARPVGVAGAASGSPAHGSRVLR. A compositionally biased stretch (low complexity) spans 397–419; the sequence is SARPVGVAGAASGSPAHGSRVLR.

It belongs to the radical SAM superfamily. RlmN family. Requires [4Fe-4S] cluster as cofactor.

It localises to the cytoplasm. The enzyme catalyses adenosine(2503) in 23S rRNA + 2 reduced [2Fe-2S]-[ferredoxin] + 2 S-adenosyl-L-methionine = 2-methyladenosine(2503) in 23S rRNA + 5'-deoxyadenosine + L-methionine + 2 oxidized [2Fe-2S]-[ferredoxin] + S-adenosyl-L-homocysteine. The catalysed reaction is adenosine(37) in tRNA + 2 reduced [2Fe-2S]-[ferredoxin] + 2 S-adenosyl-L-methionine = 2-methyladenosine(37) in tRNA + 5'-deoxyadenosine + L-methionine + 2 oxidized [2Fe-2S]-[ferredoxin] + S-adenosyl-L-homocysteine. Specifically methylates position 2 of adenine 2503 in 23S rRNA and position 2 of adenine 37 in tRNAs. The polypeptide is Probable dual-specificity RNA methyltransferase RlmN (Frankia alni (strain DSM 45986 / CECT 9034 / ACN14a)).